The sequence spans 284 residues: Bifunctional protein FolD (284 aa).

NADP(+)-binding positions include 163-165 (GAS), Ile-188, and Ile-229.

Belongs to the tetrahydrofolate dehydrogenase/cyclohydrolase family. In terms of assembly, homodimer.

The enzyme catalyses (6R)-5,10-methylene-5,6,7,8-tetrahydrofolate + NADP(+) = (6R)-5,10-methenyltetrahydrofolate + NADPH. It catalyses the reaction (6R)-5,10-methenyltetrahydrofolate + H2O = (6R)-10-formyltetrahydrofolate + H(+). Its pathway is one-carbon metabolism; tetrahydrofolate interconversion. Functionally, catalyzes the oxidation of 5,10-methylenetetrahydrofolate to 5,10-methenyltetrahydrofolate and then the hydrolysis of 5,10-methenyltetrahydrofolate to 10-formyltetrahydrofolate. This chain is Bifunctional protein FolD, found in Nautilia profundicola (strain ATCC BAA-1463 / DSM 18972 / AmH).